The chain runs to 74 residues: Porwaprin-a (74 aa).

Residues 1–24 (MSSGGLLLLLGLLTLWEVLTPVSS) form the signal peptide. Residues 27-71 (RPKKLGLCPPRPQKPCVKECKNDWSCPGQQKCCNYGCIDECRDPI) form the WAP domain. Cystine bridges form between cysteine 34/cysteine 59, cysteine 42/cysteine 63, cysteine 46/cysteine 58, and cysteine 52/cysteine 67.

The protein belongs to the venom waprin family. Expressed by the venom gland.

The protein localises to the secreted. Functionally, damages membranes of susceptible bacteria. Has no hemolytic activity. Not toxic to mice. Does not inhibit the proteinases elastase and cathepsin G. The chain is Porwaprin-a from Pseudechis porphyriacus (Red-bellied black snake).